The sequence spans 102 residues: MVIGLSHYLTVSAILFTLGVFGIFLNRKNVIVILMSVELILLAVNINMVAFSHFLNDIVGQVFALFILTVAAAEAAIGLAILVVFYRNRGSIAVEDVNMMKG.

Helical transmembrane passes span 5–25, 31–51, and 65–85; these read LSHY…GIFL, IVIL…MVAF, and LFIL…LVVF.

This sequence belongs to the complex I subunit 4L family. NDH-1 is composed of 14 different subunits. Subunits NuoA, H, J, K, L, M, N constitute the membrane sector of the complex.

The protein localises to the cell inner membrane. It carries out the reaction a quinone + NADH + 5 H(+)(in) = a quinol + NAD(+) + 4 H(+)(out). In terms of biological role, NDH-1 shuttles electrons from NADH, via FMN and iron-sulfur (Fe-S) centers, to quinones in the respiratory chain. The immediate electron acceptor for the enzyme in this species is believed to be ubiquinone. Couples the redox reaction to proton translocation (for every two electrons transferred, four hydrogen ions are translocated across the cytoplasmic membrane), and thus conserves the redox energy in a proton gradient. This Rhizobium etli (strain ATCC 51251 / DSM 11541 / JCM 21823 / NBRC 15573 / CFN 42) protein is NADH-quinone oxidoreductase subunit K 1.